The sequence spans 381 residues: MISLRKSHPLLKIINHAFIDLPAPSNISAWWNFGSLLGICLIIQILTGLFLAMHYTSDTLTAFSSVAHICRDVNYGWLLRNLHANGASMFFMCLFLHVGRGIYYGSYLYKETWNIGVILLLTVMATAFVGYVLPWGQMSFWGATVIMNLLSAIPYIGTTLAEWIWGGFAVDKATLTRFFAFHFILPFIIVAFAAVHLLFLHETGSNNPTGINPDSDKIPFHPYYTIKDALGLIFLILSLLLLGLFSPDLLGDPDNFSPANPLNTPPHIKPEWYFLFAYAILRSIPNKLGGVLALLASILILLIIPLLHTANQRSMMFRPIFQTLFWILTADLITLTWIGGQPVEQPFIIIGQLALMLYFLLILALMPLAGMFENYMLEPKW.

4 helical membrane passes run phenylalanine 33 to methionine 53, tryptophan 77 to valine 98, tryptophan 113 to leucine 133, and phenylalanine 178 to leucine 198. Residues histidine 83 and histidine 97 each contribute to the heme b site. Positions 182 and 196 each coordinate heme b. A ubiquinone is bound at residue histidine 201. The next 4 helical transmembrane spans lie at isoleucine 226–serine 246, leucine 288–histidine 308, isoleucine 320–glycine 340, and phenylalanine 347–proline 367.

Belongs to the cytochrome b family. The cytochrome bc1 complex contains 11 subunits: 3 respiratory subunits (MT-CYB, CYC1 and UQCRFS1), 2 core proteins (UQCRC1 and UQCRC2) and 6 low-molecular weight proteins (UQCRH/QCR6, UQCRB/QCR7, UQCRQ/QCR8, UQCR10/QCR9, UQCR11/QCR10 and a cleavage product of UQCRFS1). This cytochrome bc1 complex then forms a dimer. Heme b is required as a cofactor.

It is found in the mitochondrion inner membrane. In terms of biological role, component of the ubiquinol-cytochrome c reductase complex (complex III or cytochrome b-c1 complex) that is part of the mitochondrial respiratory chain. The b-c1 complex mediates electron transfer from ubiquinol to cytochrome c. Contributes to the generation of a proton gradient across the mitochondrial membrane that is then used for ATP synthesis. The polypeptide is Cytochrome b (MT-CYB) (Dasykaluta rosamondae (Little red marsupial mouse)).